A 416-amino-acid polypeptide reads, in one-letter code: MSLDVRTITPSESAEWMRAVSTGFLTAGTPSEELVADRFAGADLSRTQGAFEAGRCVATFRSFAQELTVVGGATVAADAISGVTVTPTHRRRGLLSRMMATDLAAAKERGEPVASLIAAEYPIYGRYGFGPAAWTSVWEVSVYRAGLDARRSGQPADGGRIEMVDGADVRKLGPEVHGALAARQPGVVTRDERWWRQRTGAAPSSAHEKWTEPFYVVHRAADGTVDGLMTYGTDDTWGDAKQPLNTASVRDMIALNPAAERALWHYLCSIDWITTIRSGYRAPDDLLPLLLPDPRAARMITNADWLWLRMLDVPRALEARTYGTEASLVLEVRDDAGLAGGRFLLDASTGGARCVSTTRSADLVLGVAELATLYLGDESVRRLVDLGRAEESRAGAATTADAVFRTGRRPWCPDVF.

The 148-residue stretch at 3–150 folds into the N-acetyltransferase domain; that stretch reads LDVRTITPSE…SVYRAGLDAR (148 aa). Residues 83 to 85 and 91 to 96 each bind acetyl-CoA; these read VTV and RRGLLS. The active-site Proton donor is Tyr124. The active-site Proton acceptor; via carboxylate is Phe416.

This sequence belongs to the acetyltransferase Eis family. As to quaternary structure, homohexamer; trimer of dimers.

This is an uncharacterized protein from Streptomyces griseus subsp. griseus (strain JCM 4626 / CBS 651.72 / NBRC 13350 / KCC S-0626 / ISP 5235).